The chain runs to 241 residues: Ribonuclease PH (241 aa).

Phosphate is bound by residues R89 and 127-129; that span reads GTR.

Belongs to the RNase PH family. In terms of assembly, homohexameric ring arranged as a trimer of dimers.

The catalysed reaction is tRNA(n+1) + phosphate = tRNA(n) + a ribonucleoside 5'-diphosphate. Its function is as follows. Phosphorolytic 3'-5' exoribonuclease that plays an important role in tRNA 3'-end maturation. Removes nucleotide residues following the 3'-CCA terminus of tRNAs; can also add nucleotides to the ends of RNA molecules by using nucleoside diphosphates as substrates, but this may not be physiologically important. Probably plays a role in initiation of 16S rRNA degradation (leading to ribosome degradation) during starvation. The sequence is that of Ribonuclease PH from Xylella fastidiosa (strain M23).